The primary structure comprises 208 residues: Heat shock protein 26 (208 aa).

Phosphoserine is present on residues serine 44, serine 52, and serine 58. Residues 71–179 enclose the sHSP domain; the sequence is ANRNDIHWPA…KSKERIIQIQ (109 aa). Residues 187–208 are disordered; sequence NVKANESEVKGKENGAPNGKDK. Over residues 191–208 the composition is skewed to basic and acidic residues; the sequence is NESEVKGKENGAPNGKDK.

The protein belongs to the small heat shock protein (HSP20) family.

This is Heat shock protein 26 (Hsp26) from Drosophila melanogaster (Fruit fly).